We begin with the raw amino-acid sequence, 165 residues long: U11/U12 small nuclear ribonucleoprotein 25 kDa protein (165 aa).

A Ubiquitin-like domain is found at 52-137 (MRLSVVKLDG…IRNNSQVTFM (86 aa)). The interval 145 to 165 (RGRHSKRKKHRLFRSLHKTSS) is disordered.

Component of the U11/U12 snRNPs that are part of the U12-type spliceosome.

Its subcellular location is the nucleus. This is U11/U12 small nuclear ribonucleoprotein 25 kDa protein (SNRNP25) from Arabidopsis thaliana (Mouse-ear cress).